A 188-amino-acid chain; its full sequence is Glutathione S-transferase 2 (188 aa).

The GST N-terminal domain occupies 2–79; sequence VHYKLMCFDV…FLARQYGYSG (78 aa). Glutathione is bound by residues lysine 43, 49 to 51, and 63 to 64; these read GQL and QS. The region spanning 81-188 is the GST C-terminal domain; it reads TPTEEMQVDS…PHLNVFIRKL (108 aa).

The protein belongs to the GST superfamily. Sigma family.

It carries out the reaction RX + glutathione = an S-substituted glutathione + a halide anion + H(+). Its function is as follows. Conjugation of reduced glutathione to a wide number of exogenous and endogenous hydrophobic electrophiles. The sequence is that of Glutathione S-transferase 2 (gst-2) from Caenorhabditis elegans.